The following is a 287-amino-acid chain: U1 small nuclear ribonucleoprotein A (287 aa).

An RRM 1 domain is found at 16–95; that stretch reads HTIYINNLNE…KPMRIQYAKT (80 aa). Lys66 carries the post-translational modification N6-acetyllysine. Positions 106 to 134 are disordered; it reads TYVERDRKREKRKPKSQETPAAKKAVQGG. A compositionally biased stretch (low complexity) spans 125–134; sequence PAAKKAVQGG. Omega-N-methylarginine is present on Arg157. Positions 213 to 287 constitute an RRM 2 domain; sequence HILFLTNLPE…NAMKISFAKK (75 aa).

It belongs to the RRM U1 A/B'' family. U1 snRNP is composed of the 7 core Sm proteins SNRPB, SNRPD1, SNRPD2, SNRPD3, SNRPE, SNRPF and SNRPG that assemble in a heptameric protein ring on the Sm site of the small nuclear RNA to form the core snRNP, and at least three U1 snRNP-specific proteins SNRNP70/U1-70K, SNRPA/U1-A and SNRPC/U1-C. Interacts with SFPQ; component of a snRNP-free complex with SFPQ. Interacts with IVNS1ABP (via BACK domain); the interaction is indirect.

Its subcellular location is the nucleus. Component of the spliceosomal U1 snRNP, which is essential for recognition of the pre-mRNA 5' splice-site and the subsequent assembly of the spliceosome. U1 snRNP is the first snRNP to interact with pre-mRNA. This interaction is required for the subsequent binding of U2 snRNP and the U4/U6/U5 tri-snRNP. SNRPA binds stem loop II of U1 snRNA. In a snRNP-free form (SF-A) may be involved in coupled pre-mRNA splicing and polyadenylation process. May bind preferentially to the 5'-UGCAC-3' motif on RNAs. The sequence is that of U1 small nuclear ribonucleoprotein A (Snrpa) from Mus musculus (Mouse).